Here is a 303-residue protein sequence, read N- to C-terminus: Uridine diphosphate glucose pyrophosphatase NUDT22 (303 aa).

Residues Phe-56, Tyr-87, Arg-139, Ala-144, Asp-151, His-156, and Glu-158 each coordinate substrate. One can recognise a Nudix hydrolase domain in the interval 118–285 (ADPLGVGAAL…KGAIILYNRV (168 aa)). Residues 148–168 (GLVDVPGGHPEPQALCPGGSP) form a disordered region. Positions 175-196 (GQLVVHELFSSVLQEICDEVNL) match the Nudix box motif. Positions 189 and 193 each coordinate Mg(2+). Ser-274 provides a ligand contact to substrate.

It belongs to the Nudix hydrolase family. Requires Mg(2+) as cofactor.

The catalysed reaction is UDP-sugar + H2O = UMP + alpha-D-aldose 1-phosphate.. Its function is as follows. Hydrolyzes UDP-glucose to glucose 1-phosphate and UMP and UDP-galactose to galactose 1-phosphate and UMP. Preferred substrate is UDP-glucose. The sequence is that of Uridine diphosphate glucose pyrophosphatase NUDT22 (NUDT22) from Homo sapiens (Human).